The following is a 346-amino-acid chain: Histidinol-phosphate aminotransferase (346 aa).

An N6-(pyridoxal phosphate)lysine modification is found at K209.

It belongs to the class-II pyridoxal-phosphate-dependent aminotransferase family. Histidinol-phosphate aminotransferase subfamily. As to quaternary structure, homodimer. Pyridoxal 5'-phosphate serves as cofactor.

The catalysed reaction is L-histidinol phosphate + 2-oxoglutarate = 3-(imidazol-4-yl)-2-oxopropyl phosphate + L-glutamate. Its pathway is amino-acid biosynthesis; L-histidine biosynthesis; L-histidine from 5-phospho-alpha-D-ribose 1-diphosphate: step 7/9. This is Histidinol-phosphate aminotransferase from Vibrio cholerae serotype O1 (strain ATCC 39315 / El Tor Inaba N16961).